A 230-amino-acid polypeptide reads, in one-letter code: Fibrillarin-like rRNA/tRNA 2'-O-methyltransferase (230 aa).

S-adenosyl-L-methionine-binding positions include 87 to 88 (TT), 105 to 106 (EF), 130 to 131 (DA), and 150 to 153 (DVAQ).

The protein belongs to the methyltransferase superfamily. Fibrillarin family. In terms of assembly, interacts with nop5. Component of box C/D small ribonucleoprotein (sRNP) particles that contain rpl7ae, FlpA and nop5, plus a guide RNA.

Involved in pre-rRNA and tRNA processing. Utilizes the methyl donor S-adenosyl-L-methionine to catalyze the site-specific 2'-hydroxyl methylation of ribose moieties in rRNA and tRNA. Site specificity is provided by a guide RNA that base pairs with the substrate. Methylation occurs at a characteristic distance from the sequence involved in base pairing with the guide RNA. The polypeptide is Fibrillarin-like rRNA/tRNA 2'-O-methyltransferase (Methanococcus maripaludis (strain C6 / ATCC BAA-1332)).